The sequence spans 152 residues: Transcriptional regulator MraZ (152 aa).

SpoVT-AbrB domains lie at 5-52 (ASAI…PFDE) and 81-124 (AHEC…DETA).

It belongs to the MraZ family. As to quaternary structure, forms oligomers.

The protein resides in the cytoplasm. Its subcellular location is the nucleoid. The polypeptide is Transcriptional regulator MraZ (Shewanella sediminis (strain HAW-EB3)).